The primary structure comprises 181 residues: ATP-dependent protease subunit HslV (181 aa).

Thr-9 is an active-site residue. Na(+)-binding residues include Ala-166, Cys-169, and Thr-172.

It belongs to the peptidase T1B family. HslV subfamily. In terms of assembly, a double ring-shaped homohexamer of HslV is capped on each side by a ring-shaped HslU homohexamer. The assembly of the HslU/HslV complex is dependent on binding of ATP.

The protein localises to the cytoplasm. It catalyses the reaction ATP-dependent cleavage of peptide bonds with broad specificity.. Allosterically activated by HslU binding. Its function is as follows. Protease subunit of a proteasome-like degradation complex believed to be a general protein degrading machinery. The sequence is that of ATP-dependent protease subunit HslV from Staphylococcus aureus (strain JH1).